Here is a 983-residue protein sequence, read N- to C-terminus: UPF0182 protein KRH_08700 (983 aa).

7 consecutive transmembrane segments (helical) span residues G22–T42, V67–W87, V116–Q136, L172–H192, V213–D233, G261–G281, and I288–I308. Positions G893 to T959 are disordered. The span at Q947–T959 shows a compositional bias: basic and acidic residues.

Belongs to the UPF0182 family.

The protein resides in the cell membrane. The protein is UPF0182 protein KRH_08700 of Kocuria rhizophila (strain ATCC 9341 / DSM 348 / NBRC 103217 / DC2201).